Consider the following 169-residue polypeptide: Ribosome maturation factor RimM (169 aa).

Residues 94 to 168 (DDEFYHADLI…RIVADPPEGL (75 aa)) form the PRC barrel domain.

Belongs to the RimM family. In terms of assembly, binds ribosomal protein uS19.

The protein resides in the cytoplasm. Functionally, an accessory protein needed during the final step in the assembly of 30S ribosomal subunit, possibly for assembly of the head region. Essential for efficient processing of 16S rRNA. May be needed both before and after RbfA during the maturation of 16S rRNA. It has affinity for free ribosomal 30S subunits but not for 70S ribosomes. This is Ribosome maturation factor RimM from Cereibacter sphaeroides (strain ATCC 17025 / ATH 2.4.3) (Rhodobacter sphaeroides).